The chain runs to 161 residues: Tropomyosin (161 aa).

Positions 1–161 (MDKLREKINA…DEVHQALEDL (161 aa)) form a coiled coil. Residues 40–52 (EQEYESLSRKSEA) are compositionally biased toward basic and acidic residues. Disordered regions lie at residues 40–65 (EQEY…EETK) and 107–134 (EKMR…DDME).

In terms of assembly, homodimer.

The protein localises to the cytoplasm. It localises to the cytoskeleton. Its function is as follows. Forms part of the F-actin contractile ring during cytokinesis. This chain is Tropomyosin (cdc8), found in Schizosaccharomyces pombe (strain 972 / ATCC 24843) (Fission yeast).